A 510-amino-acid polypeptide reads, in one-letter code: UDP-N-acetylmuramate--L-alanine ligase (510 aa).

Residues 1–25 (MVETVGGKDAVAPAPARSPSPPAKN) form a disordered region. 140–146 (GTHGKTT) provides a ligand contact to ATP.

It belongs to the MurCDEF family.

It localises to the cytoplasm. It carries out the reaction UDP-N-acetyl-alpha-D-muramate + L-alanine + ATP = UDP-N-acetyl-alpha-D-muramoyl-L-alanine + ADP + phosphate + H(+). Its pathway is cell wall biogenesis; peptidoglycan biosynthesis. Functionally, cell wall formation. In Synechococcus sp. (strain JA-3-3Ab) (Cyanobacteria bacterium Yellowstone A-Prime), this protein is UDP-N-acetylmuramate--L-alanine ligase.